A 411-amino-acid polypeptide reads, in one-letter code: Fructose-1,6-bisphosphatase, chloroplastic (411 aa).

The N-terminal 53 residues, 1 to 53 (MAATAGATPSSHLLLSSSRHVAASPQPRILFPSLSGKRVAVGKNHHATGVRCM), are a transit peptide targeting the chloroplast. Mg(2+) is bound by residues glutamate 133, glutamate 162, aspartate 183, leucine 185, and aspartate 186. Substrate is bound at residue 186 to 189 (DGSS). Residues cysteine 227 and cysteine 232 are joined by a disulfide bond. 5 residues coordinate substrate: asparagine 291, tyrosine 323, tyrosine 341, tyrosine 343, and lysine 353. Glutamate 359 is a Mg(2+) binding site.

The protein belongs to the FBPase class 1 family. In terms of assembly, homotetramer. Mg(2+) is required as a cofactor.

It is found in the plastid. Its subcellular location is the chloroplast stroma. The catalysed reaction is beta-D-fructose 1,6-bisphosphate + H2O = beta-D-fructose 6-phosphate + phosphate. Its pathway is carbohydrate biosynthesis; Calvin cycle. This is Fructose-1,6-bisphosphatase, chloroplastic (FBP) from Brassica napus (Rape).